Here is a 582-residue protein sequence, read N- to C-terminus: Aspartate--tRNA(Asp/Asn) ligase (582 aa).

E177 lines the L-aspartate pocket. The tract at residues 201–204 (QLFK) is aspartate. An L-aspartate-binding site is contributed by R223. Residues 223 to 225 (RDE) and Q232 each bind ATP. H447 contacts L-aspartate. E481 provides a ligand contact to ATP. R488 is a binding site for L-aspartate. 533-536 (GLDR) is an ATP binding site.

Belongs to the class-II aminoacyl-tRNA synthetase family. Type 1 subfamily. As to quaternary structure, homodimer.

It localises to the cytoplasm. It carries out the reaction tRNA(Asx) + L-aspartate + ATP = L-aspartyl-tRNA(Asx) + AMP + diphosphate. Functionally, aspartyl-tRNA synthetase with relaxed tRNA specificity since it is able to aspartylate not only its cognate tRNA(Asp) but also tRNA(Asn). Reaction proceeds in two steps: L-aspartate is first activated by ATP to form Asp-AMP and then transferred to the acceptor end of tRNA(Asp/Asn). The protein is Aspartate--tRNA(Asp/Asn) ligase of Chlamydia trachomatis serovar A (strain ATCC VR-571B / DSM 19440 / HAR-13).